We begin with the raw amino-acid sequence, 1224 residues long: Cytosolic carboxypeptidase 1 (1224 aa).

Positions 361–398 are disordered; that stretch reads PPDVDDVVDESDDNDDAETESEIETEDDKDQNFKNDDI. Over residues 363-389 the composition is skewed to acidic residues; it reads DVDDVVDESDDNDDAETESEIETEDDK. In terms of domain architecture, Peptidase M14 spans 846-1136; it reads YPYTYSTLKM…KFCVGLLRLK (291 aa). Residues histidine 918, glutamate 921, and histidine 1015 each coordinate Zn(2+). Glutamate 1100 acts as the Proton donor/acceptor in catalysis. Residues 1186-1197 are compositionally biased toward acidic residues; that stretch reads SAESNDDQDAEL. A disordered region spans residues 1186 to 1224; the sequence is SAESNDDQDAELADNVGDYEANNQEDGLSDSDSTRILLS. The segment covering 1206–1224 has biased composition (polar residues); the sequence is ANNQEDGLSDSDSTRILLS.

Belongs to the peptidase M14 family. Zn(2+) is required as a cofactor.

Its subcellular location is the cytoplasm. It localises to the cytosol. The protein resides in the nucleus. The protein localises to the mitochondrion. It catalyses the reaction (L-glutamyl)(n+1)-gamma-L-glutamyl-L-glutamyl-[protein] + H2O = (L-glutamyl)(n)-gamma-L-glutamyl-L-glutamyl-[protein] + L-glutamate. The enzyme catalyses C-terminal L-alpha-aminoacyl-L-glutamyl-L-glutamyl-[tubulin] + H2O = C-terminal L-alpha-aminoacyl-L-glutamyl-[tubulin] + L-glutamate. Functionally, metallocarboxypeptidase that mediates protein deglutamylation of tubulin and non-tubulin target proteins. Catalyzes the removal of polyglutamate side chains present on the gamma-carboxyl group of glutamate residues within the C-terminal tail of alpha- and beta-tubulin. Specifically cleaves tubulin long-side-chains, while it is not able to remove the branching point glutamate. Also catalyzes the removal of polyglutamate residues from the carboxy-terminus of alpha-tubulin as well as non-tubulin proteins. This is Cytosolic carboxypeptidase 1 (AGTPBP1) from Gallus gallus (Chicken).